A 63-amino-acid polypeptide reads, in one-letter code: Alpha-toxin CsE5 (63 aa).

The 60-residue stretch at 2 to 61 folds into the LCN-type CS-alpha/beta domain; the sequence is KDGYPVDSGNCKYECLKDDYCNDLCLERKADKGYCYWGKVSCYCYGLPDNSPTKTSGKCN. Disulfide bonds link Cys12/Cys60, Cys16/Cys36, Cys22/Cys43, and Cys26/Cys45.

It belongs to the long (4 C-C) scorpion toxin superfamily. Sodium channel inhibitor family. Alpha subfamily. In terms of tissue distribution, expressed by the venom gland.

It localises to the secreted. In terms of biological role, alpha toxins bind voltage-independently at site-3 of sodium channels (Nav) and inhibit the inactivation of the activated channels, thereby blocking neuronal transmission. The sequence is that of Alpha-toxin CsE5 from Centruroides sculpturatus (Arizona bark scorpion).